The following is a 475-amino-acid chain: Coagulation factor X (475 aa).

The signal sequence occupies residues 1–20; sequence MAGRLLLLLLCAALPDELRA. Residues 21–40 constitute a propeptide that is removed on maturation; the sequence is EGGVFIKKESADKFLERTKR. The Gla domain occupies 41–85; that stretch reads ANSFLEEMKQGNIERECNEERCSKEEAREAFEDNEKTEEFWNIYV. Residues E46, E47, E54, E56, E59, E60, E65, E66, E69, E72, and E79 each carry the 4-carboxyglutamate modification. Residues C57 and C62 are joined by a disulfide bond. An EGF-like 1; calcium-binding domain is found at 86–122; that stretch reads DGDQCSSNPCHYGGQCKDGLGSYTCSCLDGYQGKNCE. Intrachain disulfides connect C90–C101, C95–C110, C112–C121, C129–C140, C136–C152, C154–C167, C175–C348, C247–C252, C267–C283, C396–C410, and C421–C449. D103 is modified ((3R)-3-hydroxyaspartate). An EGF-like 2 domain is found at 125-168; the sequence is IPKYCKINNGDCEQFCSIKKSVQKDVVCSCTSGYELAEDGKQCV. A propeptide spans 186–240 (activation peptide); the sequence is SVILPTNSNTNATSDQDVPSTNGSILEEVFTTTTESPTPPPRNGSSITDPNVDTR. N196, N207, and N228 each carry an N-linked (GlcNAc...) asparagine glycan. Residues 216 to 237 form a disordered region; it reads TTTTESPTPPPRNGSSITDPNV. Residues 241–473 form the Peptidase S1 domain; sequence IVGGDECRPG…FLRWVRTVMR (233 aa). The Charge relay system role is filled by H282. N-linked (GlcNAc...) asparagine glycosylation is present at N285. D328 acts as the Charge relay system in catalysis. Residue S425 is the Charge relay system of the active site.

The protein belongs to the peptidase S1 family. As to quaternary structure, the two chains are formed from a single-chain precursor by the excision of two Arg residues and are held together by 1 or more disulfide bonds. Post-translationally, the vitamin K-dependent, enzymatic carboxylation of some glutamate residues allows the modified protein to bind calcium. The activation peptide is cleaved by factor IXa (in the intrinsic pathway), or by factor VIIa (in the extrinsic pathway). In terms of processing, the iron and 2-oxoglutarate dependent 3-hydroxylation of aspartate and asparagine is (R) stereospecific within EGF domains. Liver and chorioallantoic membrane.

It is found in the secreted. It catalyses the reaction Selective cleavage of Arg-|-Thr and then Arg-|-Ile bonds in prothrombin to form thrombin.. Its function is as follows. Factor Xa is a vitamin K-dependent glycoprotein that converts prothrombin to thrombin in the presence of factor Va, calcium and phospholipid during blood clotting. VAP cleaves the fusion proteins of Sendai virus, NDV, and influenza virus a at a specific single arginine-containing site, and plays a key role in the viral spreading in the allantoic sac. The chain is Coagulation factor X (F10) from Gallus gallus (Chicken).